A 130-amino-acid polypeptide reads, in one-letter code: Small ribosomal subunit protein uS8 (130 aa).

It belongs to the universal ribosomal protein uS8 family. Part of the 30S ribosomal subunit. Contacts proteins S5 and S12.

One of the primary rRNA binding proteins, it binds directly to 16S rRNA central domain where it helps coordinate assembly of the platform of the 30S subunit. The polypeptide is Small ribosomal subunit protein uS8 (Buchnera aphidicola subsp. Cinara cedri (strain Cc)).